Here is a 160-residue protein sequence, read N- to C-terminus: CST complex subunit STN1 (160 aa).

Residues 41-133 (VEIVGTIVSR…QITANVAVAE (93 aa)) constitute a DNA-binding region (OB).

This sequence belongs to the STN1 family. As to quaternary structure, component of the CST complex, composed of CTC1, TEN1 and STN1. Interacts with CTC1. Interacts with TEN1. Interacts with POT1A. In vitro interaction with TEN1 and POT1A is mutually exclusive, indicating that POT1A and TEN1 may compete for the same binding site. Widely expressed.

It is found in the nucleus. The protein localises to the chromosome. It localises to the telomere. Its function is as follows. Component of the CST complex, a complex that binds to single-stranded DNA and is required to protect telomeres from DNA degradation. The CST complex binds single-stranded DNA with high affinity in a sequence-independent manner, while isolated subunits bind DNA with low affinity by themselves. Associates with enzymatically active telomerase. Plays a genomewide role in DNA replication and facilitates re-replication at non-telomeric loci. The polypeptide is CST complex subunit STN1 (Arabidopsis thaliana (Mouse-ear cress)).